A 101-amino-acid chain; its full sequence is NAD(P)H-quinone oxidoreductase subunit 4L (101 aa).

3 helical membrane-spanning segments follow: residues 3–23, 30–50, and 64–84; these read LQYFLLIAAALFCIGVYGLVT, VLMSIELMLNAVNLNLMAFSN, and IFVITIAAAEAAVGLAIVLAI.

Belongs to the complex I subunit 4L family. As to quaternary structure, NDH-1 can be composed of about 15 different subunits; different subcomplexes with different compositions have been identified which probably have different functions.

It is found in the cellular thylakoid membrane. It catalyses the reaction a plastoquinone + NADH + (n+1) H(+)(in) = a plastoquinol + NAD(+) + n H(+)(out). It carries out the reaction a plastoquinone + NADPH + (n+1) H(+)(in) = a plastoquinol + NADP(+) + n H(+)(out). In terms of biological role, NDH-1 shuttles electrons from an unknown electron donor, via FMN and iron-sulfur (Fe-S) centers, to quinones in the respiratory and/or the photosynthetic chain. The immediate electron acceptor for the enzyme in this species is believed to be plastoquinone. Couples the redox reaction to proton translocation, and thus conserves the redox energy in a proton gradient. Cyanobacterial NDH-1 also plays a role in inorganic carbon-concentration. The chain is NAD(P)H-quinone oxidoreductase subunit 4L from Leptolyngbya boryana (Plectonema boryanum).